Consider the following 88-residue polypeptide: MWHNVGLTLLVFVATLLIVLLLMVCGWYFVWHLFLSKFKFLRELVGDTGSQEGDNEQPSGSEAEEDPSASPHKMRSARQRRPPVDDGH.

A helical membrane pass occupies residues 10-30; that stretch reads LVFVATLLIVLLLMVCGWYFV. The span at 48–60 shows a compositional bias: polar residues; it reads TGSQEGDNEQPSG. A disordered region spans residues 48–88; that stretch reads TGSQEGDNEQPSGSEAEEDPSASPHKMRSARQRRPPVDDGH. Residues Ser-59, Ser-61, and Ser-70 each carry the phosphoserine modification. Residues 72–81 show a composition bias toward basic residues; that stretch reads HKMRSARQRR.

It belongs to the SMIM13 family.

It localises to the membrane. The protein is Small integral membrane protein 13 (Smim13) of Rattus norvegicus (Rat).